Consider the following 288-residue polypeptide: HTH-type transcriptional regulator CzcR (288 aa).

One can recognise an HTH lysR-type domain in the interval Met-1–Thr-58. Positions Val-18–Lys-37 form a DNA-binding region, H-T-H motif.

The protein belongs to the LysR transcriptional regulatory family.

This chain is HTH-type transcriptional regulator CzcR (czcR), found in Bacillus anthracis.